We begin with the raw amino-acid sequence, 81 residues long: ATP synthase subunit C, plastid (81 aa).

2 consecutive transmembrane segments (helical) span residues 3–23 (PLIP…ASIG) and 61–81 (EALT…NPFI).

The protein belongs to the ATPase C chain family. In terms of assembly, F-type ATPases have 2 components, F(1) - the catalytic core - and F(0) - the membrane proton channel. F(1) has five subunits: alpha(3), beta(3), gamma(1), delta(1), epsilon(1). F(0) has four main subunits: a(1), b(1), b'(1) and c(10-14). The alpha and beta chains form an alternating ring which encloses part of the gamma chain. F(1) is attached to F(0) by a central stalk formed by the gamma and epsilon chains, while a peripheral stalk is formed by the delta, b and b' chains.

The protein resides in the plastid membrane. Its function is as follows. F(1)F(0) ATP synthase produces ATP from ADP in the presence of a proton or sodium gradient. F-type ATPases consist of two structural domains, F(1) containing the extramembraneous catalytic core and F(0) containing the membrane proton channel, linked together by a central stalk and a peripheral stalk. During catalysis, ATP synthesis in the catalytic domain of F(1) is coupled via a rotary mechanism of the central stalk subunits to proton translocation. Functionally, key component of the F(0) channel; it plays a direct role in translocation across the membrane. A homomeric c-ring of between 10-14 subunits forms the central stalk rotor element with the F(1) delta and epsilon subunits. This Aneura mirabilis (Parasitic liverwort) protein is ATP synthase subunit C, plastid.